The following is a 191-amino-acid chain: Heme-binding protein 1 (191 aa).

Belongs to the HEBP family. In terms of assembly, monomer.

Its subcellular location is the cytoplasm. In terms of biological role, may bind free porphyrinogens that may be present in the cell and thus facilitate removal of these potentially toxic compound. Binds with a high affinity to one molecule of heme or porphyrins. It binds metalloporphyrins, free porphyrins and N-methylprotoporphyrin with similar affinities. The polypeptide is Heme-binding protein 1 (HEBP1) (Bos taurus (Bovine)).